A 383-amino-acid chain; its full sequence is UDP-N-acetylenolpyruvoylglucosamine reductase (383 aa).

The FAD-binding PCMH-type domain occupies 42–212; it reads LSCQAMQLIT…TRVGFKLHKD (171 aa). R189 is an active-site residue. The Proton donor role is filled by S267. Residue E369 is part of the active site.

It belongs to the MurB family. FAD is required as a cofactor.

The protein resides in the cytoplasm. The catalysed reaction is UDP-N-acetyl-alpha-D-muramate + NADP(+) = UDP-N-acetyl-3-O-(1-carboxyvinyl)-alpha-D-glucosamine + NADPH + H(+). It participates in cell wall biogenesis; peptidoglycan biosynthesis. Cell wall formation. The protein is UDP-N-acetylenolpyruvoylglucosamine reductase of Psychrobacter sp. (strain PRwf-1).